Here is a 102-residue protein sequence, read N- to C-terminus: Secreted RxLR effector protein 61 (102 aa).

Positions 1–22 (MAFQLRIVQHLLHITFLRLPLA) are cleaved as a signal peptide. The RxLR-dEER signature appears at 51–60 (RRLRQLNEHR).

This sequence belongs to the RxLR effector family.

It localises to the secreted. The protein resides in the host chloroplast envelope. It is found in the host cytoplasm. Its subcellular location is the host nucleus. In terms of biological role, effector that partially suppresses the tobacco programmed cell death induced by cell death-inducing proteins. In Plasmopara viticola (Downy mildew of grapevine), this protein is Secreted RxLR effector protein 61.